Reading from the N-terminus, the 82-residue chain is Large ribosomal subunit protein bL31B (82 aa).

The protein belongs to the bacterial ribosomal protein bL31 family. Type B subfamily. In terms of assembly, part of the 50S ribosomal subunit.

This chain is Large ribosomal subunit protein bL31B, found in Proteus mirabilis (strain HI4320).